Consider the following 204-residue polypeptide: LexA repressor (204 aa).

Residues 29-49 constitute a DNA-binding region (H-T-H motif); it reads RAEIADIMGFQSKNAASDHLR. Catalysis depends on for autocatalytic cleavage activity residues S123 and K160.

Belongs to the peptidase S24 family. In terms of assembly, homodimer.

The catalysed reaction is Hydrolysis of Ala-|-Gly bond in repressor LexA.. Functionally, represses a number of genes involved in the response to DNA damage (SOS response), including recA and lexA. In the presence of single-stranded DNA, RecA interacts with LexA causing an autocatalytic cleavage which disrupts the DNA-binding part of LexA, leading to derepression of the SOS regulon and eventually DNA repair. The polypeptide is LexA repressor (Alcanivorax borkumensis (strain ATCC 700651 / DSM 11573 / NCIMB 13689 / SK2)).